The chain runs to 86 residues: NAD(P)H-quinone oxidoreductase subunit O (86 aa).

This sequence belongs to the complex I NdhO subunit family. In terms of assembly, NDH-1 can be composed of about 15 different subunits; different subcomplexes with different compositions have been identified which probably have different functions.

It is found in the cellular thylakoid membrane. It catalyses the reaction a plastoquinone + NADH + (n+1) H(+)(in) = a plastoquinol + NAD(+) + n H(+)(out). It carries out the reaction a plastoquinone + NADPH + (n+1) H(+)(in) = a plastoquinol + NADP(+) + n H(+)(out). Functionally, NDH-1 shuttles electrons from an unknown electron donor, via FMN and iron-sulfur (Fe-S) centers, to quinones in the respiratory and/or the photosynthetic chain. The immediate electron acceptor for the enzyme in this species is believed to be plastoquinone. Couples the redox reaction to proton translocation, and thus conserves the redox energy in a proton gradient. Cyanobacterial NDH-1 also plays a role in inorganic carbon-concentration. The sequence is that of NAD(P)H-quinone oxidoreductase subunit O from Prochlorococcus marinus (strain SARG / CCMP1375 / SS120).